The sequence spans 463 residues: uncharacterized protein (463 aa).

This is an uncharacterized protein from Ostreid herpesvirus 1 (isolate France) (OsHV-1).